A 469-amino-acid chain; its full sequence is Serine hydroxymethyltransferase, cytosolic (469 aa).

Thr-20 carries the phosphothreonine modification. A Phosphoserine modification is found at Ser-26. The residue at position 248 (Lys-248) is an N6-(pyridoxal phosphate)lysine. Ser-429 carries the phosphoserine modification. A Glycyl lysine isopeptide (Lys-Gly) (interchain with G-Cter in ubiquitin) cross-link involves residue Lys-456.

It belongs to the SHMT family. In terms of assembly, homotetramer. Pyridoxal 5'-phosphate serves as cofactor.

The protein resides in the cytoplasm. The catalysed reaction is (6R)-5,10-methylene-5,6,7,8-tetrahydrofolate + glycine + H2O = (6S)-5,6,7,8-tetrahydrofolate + L-serine. It functions in the pathway one-carbon metabolism; tetrahydrofolate interconversion. In terms of biological role, interconversion of serine and glycine. The protein is Serine hydroxymethyltransferase, cytosolic of Saccharomyces cerevisiae (strain ATCC 204508 / S288c) (Baker's yeast).